A 383-amino-acid chain; its full sequence is Galactokinase (383 aa).

34–37 (EHTD) is a substrate binding site. Position 124 to 130 (124 to 130 (GAGLSSS)) interacts with ATP. S130 and E162 together coordinate Mg(2+). D174 acts as the Proton acceptor in catalysis. Substrate is bound at residue Y223.

The protein belongs to the GHMP kinase family. GalK subfamily.

It is found in the cytoplasm. The enzyme catalyses alpha-D-galactose + ATP = alpha-D-galactose 1-phosphate + ADP + H(+). Its pathway is carbohydrate metabolism; galactose metabolism. Its function is as follows. Catalyzes the transfer of the gamma-phosphate of ATP to D-galactose to form alpha-D-galactose-1-phosphate (Gal-1-P). The sequence is that of Galactokinase from Serratia proteamaculans (strain 568).